The primary structure comprises 475 residues: MKTPVITRFAPSPTGFLHIGGARTALFNWLYARHTGGRMLLRIEDTDRQRSTPEATAAILDGLAWLGLTWDGEPISQFARASRHKEVAEELVARGQAYYCYCSPEEIEAMREKARAEGRPPRYDGTWRDKDPAEAPSGVKPVIRIKAPLEGETVIHDRVQGDVRFPNKDLDDFIILRSDGTPTYMHAVVVDDHDMGVTHVIRGDDHLTNAARQAIIYRAMGWDIPVMAHIPLIHGPDGGKLSKRHGALGVEAYRAMGYLPSALCNYLARLGWSHGDDEVMTTEQMIEWFDIDDVNKGAARFDFQKMEALNGIHMRQMDDEALFGIFIATLPHLEGGQAFLDKLDEKRRGQLRSALPGLKERAKTLLELLDGAGFLVAERPLTIDDKAAELLDGDARAMLATLAEEMAGLGDWTAESTEAAVRNFAENTGRKLGKVAQPLRAALTGRTTSPGIFDVLAVLGREESLGRIRDQAVEK.

Residues 11 to 21 (PSPTGFLHIGG) carry the 'HIGH' region motif. Residues 116–133 (AEGRPPRYDGTWRDKDPA) show a composition bias toward basic and acidic residues. Positions 116–137 (AEGRPPRYDGTWRDKDPAEAPS) are disordered. Positions 240–244 (KLSKR) match the 'KMSKS' region motif. Residue Lys-243 coordinates ATP.

This sequence belongs to the class-I aminoacyl-tRNA synthetase family. Glutamate--tRNA ligase type 1 subfamily. Monomer.

Its subcellular location is the cytoplasm. The enzyme catalyses tRNA(Glu) + L-glutamate + ATP = L-glutamyl-tRNA(Glu) + AMP + diphosphate. Catalyzes the attachment of glutamate to tRNA(Glu) in a two-step reaction: glutamate is first activated by ATP to form Glu-AMP and then transferred to the acceptor end of tRNA(Glu). This Chelativorans sp. (strain BNC1) protein is Glutamate--tRNA ligase 2.